A 376-amino-acid chain; its full sequence is Methionine import ATP-binding protein MetN 1 (376 aa).

Residues 34-273 enclose the ABC transporter domain; sequence VRFINLGKTY…PQHEVSKTLL (240 aa). 70-77 is a binding site for ATP; it reads GRSGAGKS.

This sequence belongs to the ABC transporter superfamily. Methionine importer (TC 3.A.1.24) family. The complex is composed of two ATP-binding proteins (MetN), two transmembrane proteins (MetI) and a solute-binding protein (MetQ).

Its subcellular location is the cell inner membrane. It carries out the reaction L-methionine(out) + ATP + H2O = L-methionine(in) + ADP + phosphate + H(+). The catalysed reaction is D-methionine(out) + ATP + H2O = D-methionine(in) + ADP + phosphate + H(+). In terms of biological role, part of the ABC transporter complex MetNIQ involved in methionine import. Responsible for energy coupling to the transport system. In Pseudomonas syringae pv. tomato (strain ATCC BAA-871 / DC3000), this protein is Methionine import ATP-binding protein MetN 1.